Here is a 203-residue protein sequence, read N- to C-terminus: Small ribosomal subunit protein uS4 (203 aa).

The S4 RNA-binding domain maps to 93 to 156 (RRLDNVVYRL…LKVPAILEAV (64 aa)).

This sequence belongs to the universal ribosomal protein uS4 family. As to quaternary structure, part of the 30S ribosomal subunit. Contacts protein S5. The interaction surface between S4 and S5 is involved in control of translational fidelity.

Its function is as follows. One of the primary rRNA binding proteins, it binds directly to 16S rRNA where it nucleates assembly of the body of the 30S subunit. In terms of biological role, with S5 and S12 plays an important role in translational accuracy. This Streptococcus pneumoniae serotype 2 (strain D39 / NCTC 7466) protein is Small ribosomal subunit protein uS4.